The sequence spans 204 residues: Tumor protein D53 (204 aa).

Residues 1–31 are disordered; that stretch reads MEAQAQGLLETEPLQGRDGDAVGSADFSSML. A coiled-coil region spans residues 22–73; the sequence is VGSADFSSMLSEEEKEELKAELIQLEDEITTLRQVLSAKERHLVEIKQKLGM. Ser29, Ser86, Ser122, and Ser131 each carry phosphoserine. The residue at position 133 (Arg133) is an Omega-N-methylarginine. At Thr146 the chain carries Phosphothreonine. Residues Ser149 and Ser174 each carry the phosphoserine modification. A disordered region spans residues 164–204; that stretch reads KVGGTNHGGGSFEEVLNSTAHASSQNASAGSRQTKDEELQC. A compositionally biased stretch (polar residues) spans 179–195; the sequence is LNSTAHASSQNASAGSR.

This sequence belongs to the TPD52 family. Forms a homodimer or heterodimer with other members of the family.

This is Tumor protein D53 (Tpd52l1) from Mus musculus (Mouse).